The primary structure comprises 753 residues: Polyadenylate-binding protein, cytoplasmic and nuclear (753 aa).

The span at M1–S43 shows a compositional bias: low complexity. A disordered region spans residues M1–S49. RRM domains follow at residues A48–R126, G136–S213, T229–K306, and V332–R460. 3 disordered regions span residues V363–K417, R607–G649, and G727–S753. Basic and acidic residues predominate over residues D376–K417. A compositionally biased stretch (gly residues) spans R607 to P619. A compositionally biased stretch (low complexity) spans Q633–G649. A PABC domain is found at A647 to K724. Basic and acidic residues predominate over residues P737 to S753.

The protein belongs to the polyadenylate-binding protein type-1 family.

It is found in the cytoplasm. It localises to the nucleus. Its function is as follows. Binds the poly(A) tail of mRNA. Appears to be an important mediator of the multiple roles of the poly(A) tail in mRNA biogenesis, stability and translation. In the nucleus, involved in both mRNA cleavage and polyadenylation. Is also required for efficient mRNA export to the cytoplasm. Acts in concert with a poly(A)-specific nuclease (PAN) to affect poly(A) tail shortening, which may occur concomitantly with either nucleocytoplasmic mRNA transport or translational initiation. In the cytoplasm, stimulates translation initiation and regulates mRNA decay through translation termination-coupled poly(A) shortening, probably mediated by PAN. This Aspergillus terreus (strain NIH 2624 / FGSC A1156) protein is Polyadenylate-binding protein, cytoplasmic and nuclear (pab1).